The chain runs to 350 residues: MGVTALRELIPSKCKKTLELKSLSNKSVALDAYNTLYQFLAAIRGEDGRPLMDSKGRVTSHLSGLFYRTINMLENGIKVAYVFDGAPPKLKTREIERRQKLKQEAEKKYEEAVRRGDVEEARKYAQMSAKLTKEMVEEAKRLLEAMGVPWVQAPSEGEAQAAYMAAKGDVWASASQDYDSLLFGSPRLVRNLAVSGRRKLPNKNVYVEVKPEEITLKCVLEELGITREQLVAIAVLIGTDYTPGVKGVGPKTALRYVKSYGDLERVLTALGVDDKELYLEAYNFFLNPQVTDDYELVWRRPDPQKIIEILVYEHDFNEERVRKAIERLMKAWKEKLSTKQSTLDMFFKKR.

The segment at 1–102 (MGVTALRELI…REIERRQKLK (102 aa)) is N-domain. Mg(2+) contacts are provided by Asp31, Asp84, Glu156, Glu158, Asp177, Asp179, and Asp240. Positions 120-261 (EARKYAQMSA…TALRYVKSYG (142 aa)) are I-domain. The segment at 339–347 (KQSTLDMFF) is interaction with PCNA.

The protein belongs to the XPG/RAD2 endonuclease family. FEN1 subfamily. As to quaternary structure, interacts with PCNA. PCNA stimulates the nuclease activity without altering cleavage specificity. It depends on Mg(2+) as a cofactor.

In terms of biological role, structure-specific nuclease with 5'-flap endonuclease and 5'-3' exonuclease activities involved in DNA replication and repair. During DNA replication, cleaves the 5'-overhanging flap structure that is generated by displacement synthesis when DNA polymerase encounters the 5'-end of a downstream Okazaki fragment. Binds the unpaired 3'-DNA end and kinks the DNA to facilitate 5' cleavage specificity. Cleaves one nucleotide into the double-stranded DNA from the junction in flap DNA, leaving a nick for ligation. Also involved in the base excision repair (BER) pathway. Acts as a genome stabilization factor that prevents flaps from equilibrating into structures that lead to duplications and deletions. Also possesses 5'-3' exonuclease activity on nicked or gapped double-stranded DNA. This chain is Flap endonuclease 1, found in Ignicoccus hospitalis (strain KIN4/I / DSM 18386 / JCM 14125).